The chain runs to 97 residues: Defective intron-associated endonuclease 3 (97 aa).

This endonuclease is specific to the nrdB gene splice junction and is involved in intron homing. This chain is Defective intron-associated endonuclease 3 (ITEVIIIR), found in Escherichia coli (Bacteriophage T4).